The following is a 1543-amino-acid chain: Tubby-related protein 4 (1543 aa).

7 WD repeats span residues 6 to 72 (EHGP…STPQ), 73 to 115 (RINF…YEGR), 116 to 158 (WSVE…SGQR), 159 to 237 (HWSS…SDDY), 238 to 276 (APPQ…YDDL), 277 to 334 (SPTV…GEHI), and 335 to 372 (FTLD…RVEH). Residues 364 to 414 (ALYVVRVEHRVSSLQLLCQQAIASTLREDKDVSKLTLPPRLCSYLSTAFIP) form the SOCS box domain. Disordered stretches follow at residues 530–577 (SPKI…SVGS) and 829–850 (TKIN…TAAP). Residue Ser577 is modified to Phosphoserine. Asymmetric dimethylarginine occurs at positions 945 and 950. Disordered stretches follow at residues 1004 to 1058 (SPRA…HTAS), 1326 to 1355 (VPQR…AITE), and 1367 to 1453 (DFNS…ASEK). Positions 1036–1050 (TCSQCSGTGPSSQPG) are enriched in polar residues. The segment covering 1329-1347 (RTEKFGKKNRKRLDSRAEE) has biased composition (basic and acidic residues). Phosphoserine is present on residues Ser1343 and Ser1374. Residues 1443–1453 (EEAKCRRASEK) are compositionally biased toward basic and acidic residues. The segment at 1466-1543 (VMANKQPLWN…ALANVTQRLK (78 aa)) is TUB.

This sequence belongs to the TUB family. In terms of tissue distribution, expressed mainly in the brain, skeletal muscle, testis and kidney.

It localises to the cytoplasm. Its pathway is protein modification; protein ubiquitination. May be a substrate-recognition component of a SCF-like ECS (Elongin-Cullin-SOCS-box protein) E3 ubiquitin ligase complex which mediates the ubiquitination and subsequent proteasomal degradation of target proteins. This is Tubby-related protein 4 (TULP4) from Homo sapiens (Human).